Consider the following 219-residue polypeptide: MSDHRHRFLQLALTADALRFGQFTLKSGRLSPYFFNAGRFDSGSLLSQLGACYSDAIDATGIKYDVVFGPAYKGIPLATAMACELAQRGRELPLSFNRKEAKAHGEGGQLIGADMNGKRVLIVDDVITAGTAIREALGIIRDAGGIPAGIVVALDRQEIASDTDHRSAAQAVAEEAGIPVIAVATLADLLDFASGNPELVGYRQPLEAYRAQYGVRSIR.

Residue Lys26 participates in 5-phospho-alpha-D-ribose 1-diphosphate binding. Position 34-35 (34-35 (FF)) interacts with orotate. 5-phospho-alpha-D-ribose 1-diphosphate-binding positions include 72-73 (YK), Arg98, Lys99, Lys102, His104, and 124-132 (DDVITAGTA). 2 residues coordinate orotate: Thr128 and Arg156.

This sequence belongs to the purine/pyrimidine phosphoribosyltransferase family. PyrE subfamily. As to quaternary structure, homodimer. Mg(2+) is required as a cofactor.

The enzyme catalyses orotidine 5'-phosphate + diphosphate = orotate + 5-phospho-alpha-D-ribose 1-diphosphate. It functions in the pathway pyrimidine metabolism; UMP biosynthesis via de novo pathway; UMP from orotate: step 1/2. In terms of biological role, catalyzes the transfer of a ribosyl phosphate group from 5-phosphoribose 1-diphosphate to orotate, leading to the formation of orotidine monophosphate (OMP). This Stenotrophomonas maltophilia (strain R551-3) protein is Orotate phosphoribosyltransferase.